A 287-amino-acid chain; its full sequence is Pantothenate synthetase (287 aa).

Met-30–His-37 contacts ATP. His-37 (proton donor) is an active-site residue. Gln-61 lines the (R)-pantoate pocket. Residue Gln-61 coordinates beta-alanine. Gly-149–Asp-152 contacts ATP. Gln-155 lines the (R)-pantoate pocket. ATP-binding positions include Val-178 and Leu-186–Arg-189.

It belongs to the pantothenate synthetase family. In terms of assembly, homodimer.

It is found in the cytoplasm. The enzyme catalyses (R)-pantoate + beta-alanine + ATP = (R)-pantothenate + AMP + diphosphate + H(+). It participates in cofactor biosynthesis; (R)-pantothenate biosynthesis; (R)-pantothenate from (R)-pantoate and beta-alanine: step 1/1. Its function is as follows. Catalyzes the condensation of pantoate with beta-alanine in an ATP-dependent reaction via a pantoyl-adenylate intermediate. The chain is Pantothenate synthetase from Pseudomonas putida (strain W619).